The chain runs to 153 residues: ORM1-like protein 3 (153 aa).

An important for ceramide level-sensing region spans residues 1–17 (MNVGTAHSEVNPNTRVM). Residues 1–21 (MNVGTAHSEVNPNTRVMNSRG) lie on the Cytoplasmic side of the membrane. A run of 2 helical transmembrane segments spans residues 22–42 (IWLS…SIPF) and 43–63 (VSVP…MYIF). Over 64–94 (LHTVKGTPFETPDQGKARLLTHWEQMDYGVQ) the chain is Cytoplasmic. A helical membrane pass occupies residues 95-117 (FTASRKFLTITPIVLYFLTSFYT). Residues 118 to 121 (KYDQ) lie on the Extracellular side of the membrane. The helical transmembrane segment at 122 to 142 (VHFILNTVSLMTVLIPKLPQL) threads the bilayer. The residue at position 137 (Pro-137) is a Hydroxyproline. Topologically, residues 143–153 (HGVRIFGINKY) are cytoplasmic.

This sequence belongs to the ORM family. Ceramide-sensitive subunit of the serine palmitoyltransferase (SPT) complex, which is also composed of SPTLC1, SPTLC2/3 and SPTSSA/B. When hydroxylated at Pro-137, ubiquitinated via 'Lys-48'-linkage, leading to proteasomal degradation. In endothelial cells, ORMDL3 proteasomal degradation is controlled by the sphingosine 1-phosphate receptor signaling pathway.

Its subcellular location is the endoplasmic reticulum membrane. Plays an essential role in the homeostatic regulation of sphingolipid de novo biosynthesis by modulating the activity of the serine palmitoyltransferase (SPT) in response to ceramide levels. When complexed to SPT, the binding of ceramides to its N-terminus stabilizes a conformation that block SPT substrate entry, hence preventing SPT catalytic activity. Through this mechanism, maintains ceramide levels at sufficient concentrations for the production of complex sphingolipids, but which prevents the accumulation of ceramides to levels that trigger apoptosis. The chain is ORM1-like protein 3 (Ormdl3) from Mus musculus (Mouse).